The sequence spans 322 residues: Hydroxypyruvate reductase (322 aa).

Residues Arg-160 to Ile-161, Asp-180, Cys-211 to Pro-212, Asn-238 to Arg-240, and Asp-264 each bind NAD(+). Arg-240 is an active-site residue. Residue Glu-269 is part of the active site. His-288 serves as the catalytic Proton donor.

This sequence belongs to the D-isomer specific 2-hydroxyacid dehydrogenase family.

The enzyme catalyses (R)-glycerate + NAD(+) = 3-hydroxypyruvate + NADH + H(+). Its pathway is carbohydrate metabolism. In terms of biological role, involved in catabolism of D-apiose. Catalyzes the reduction of 3-hydroxypyruvate to glycerate. The protein is Hydroxypyruvate reductase of Blautia hydrogenotrophica (strain DSM 10507 / JCM 14656 / S5a33) (Ruminococcus hydrogenotrophicus).